The primary structure comprises 232 residues: Ubiquinone biosynthesis O-methyltransferase (232 aa).

4 residues coordinate S-adenosyl-L-methionine: Arg36, Gly55, Asp76, and Leu120.

This sequence belongs to the methyltransferase superfamily. UbiG/COQ3 family.

The catalysed reaction is a 3-demethylubiquinol + S-adenosyl-L-methionine = a ubiquinol + S-adenosyl-L-homocysteine + H(+). The enzyme catalyses a 3-(all-trans-polyprenyl)benzene-1,2-diol + S-adenosyl-L-methionine = a 2-methoxy-6-(all-trans-polyprenyl)phenol + S-adenosyl-L-homocysteine + H(+). It functions in the pathway cofactor biosynthesis; ubiquinone biosynthesis. Functionally, O-methyltransferase that catalyzes the 2 O-methylation steps in the ubiquinone biosynthetic pathway. This chain is Ubiquinone biosynthesis O-methyltransferase, found in Dechloromonas aromatica (strain RCB).